The primary structure comprises 381 residues: Gustatory and pheromone receptor 39a, isoform C (381 aa).

The Cytoplasmic segment spans residues 1-37 (MDFQPGELCAYYRLCRYLGIFCIDYNPTKKKFRLRRS). A helical transmembrane segment spans residues 38-58 (VLCYIVHFALQAYLVGCISVM). Residues 59–79 (VTYWRRCFKSELTTTGNHFDR) are Extracellular-facing. The helical transmembrane segment at 80–100 (LVMVIALGILVVQNAWLIWLQ) threads the bilayer. At 101–129 (APHLRIVRQIEFYRRNHLANVRLLLPKRL) the chain is on the cytoplasmic side. The chain crosses the membrane as a helical span at residues 130-150 (LWLIIATNVVYMANFIKTCIF). At 151 to 171 (EWLTDASRLFVITSLGFPLRY) the chain is on the extracellular side. The chain crosses the membrane as a helical span at residues 172-192 (LVTSFTMGTYFCMVHIVRLVL). The Cytoplasmic segment spans residues 193-239 (DWNQSQINAIIDESADLKMTSPNRLRLRVCLEMHDRLMLLCNDEISL). The helical transmembrane segment at 240-260 (VYGFIAWLSWMFASLDVTGVI) threads the bilayer. Residues 261 to 271 (YLTMVIQTKKS) lie on the Extracellular side of the membrane. A helical transmembrane segment spans residues 272–292 (IVLKLITNVVWLSPTFMTCAA). The Cytoplasmic portion of the chain corresponds to 293–350 (SFMSNRVTIQANKTAKMLTKVPRTGTGLDRMIEKFLLKNLRQKPILTAYGFFALDKST). A helical membrane pass occupies residues 351–371 (LFKLFTAIFTYMVILVQFKEM). Residues 372-381 (ENSTKSINKF) lie on the Extracellular side of the membrane. Asparagine 373 is a glycosylation site (N-linked (GlcNAc...) asparagine).

The protein belongs to the insect chemoreceptor superfamily. Gustatory receptor (GR) family. Gr21a subfamily. As to expression, expressed in the adult labellar chemosensory neurons. In larvae, is expressed in neurons of the terminal external chemosensory organ, as well as in the dorsal pharyngeal sense organ.

Its subcellular location is the cell membrane. Gustatory receptor which mediates acceptance or avoidance behavior, depending on its substrates. Plays a role in sustaining courtship behavior in males, possibly through the reception of a stimulating arrestant pheromone. In Drosophila melanogaster (Fruit fly), this protein is Gustatory and pheromone receptor 39a, isoform C (Gr39a).